The chain runs to 158 residues: Cytochrome c-type biogenesis protein CcmE (158 aa).

Residues 1–23 (MNSQSFKNFPSLKFISKKRRKER) are Cytoplasmic-facing. Residues 24 to 44 (LLMVLLCLFIMAITTGLIVYA) form a helical; Signal-anchor for type II membrane protein membrane-spanning segment. The Periplasmic portion of the chain corresponds to 45–158 (MRNTANFFRT…DRLKKHHDIK (114 aa)). 2 residues coordinate heme: H138 and Y142.

This sequence belongs to the CcmE/CycJ family.

Its subcellular location is the cell inner membrane. In terms of biological role, heme chaperone required for the biogenesis of c-type cytochromes. Transiently binds heme delivered by CcmC and transfers the heme to apo-cytochromes in a process facilitated by CcmF and CcmH. This is Cytochrome c-type biogenesis protein CcmE from Bartonella bacilliformis (strain ATCC 35685 / KC583 / Herrer 020/F12,63).